The sequence spans 829 residues: Leucine--tRNA ligase (829 aa).

The short motif at 40–51 (PYPSGAGLHVGH) is the 'HIGH' region element. The 'KMSKS' region signature appears at 609 to 613 (KMSKS). Lys-612 is a binding site for ATP.

Belongs to the class-I aminoacyl-tRNA synthetase family.

It is found in the cytoplasm. The catalysed reaction is tRNA(Leu) + L-leucine + ATP = L-leucyl-tRNA(Leu) + AMP + diphosphate. In Lactococcus lactis subsp. lactis (strain IL1403) (Streptococcus lactis), this protein is Leucine--tRNA ligase.